Here is an 88-residue protein sequence, read N- to C-terminus: Elongation factor 1-beta (88 aa).

Belongs to the EF-1-beta/EF-1-delta family.

In terms of biological role, promotes the exchange of GDP for GTP in EF-1-alpha/GDP, thus allowing the regeneration of EF-1-alpha/GTP that could then be used to form the ternary complex EF-1-alpha/GTP/AAtRNA. The sequence is that of Elongation factor 1-beta from Halobacterium salinarum (strain ATCC 29341 / DSM 671 / R1).